Consider the following 657-residue polypeptide: tRNA 5-methylaminomethyl-2-thiouridine biosynthesis bifunctional protein MnmC (657 aa).

The segment at 1-233 (MPRGLILATP…KRDMTVAAFP (233 aa)) is tRNA (mnm(5)s(2)U34)-methyltransferase. The tract at residues 256-657 (LGAGLAGCSV…RALRHGKHAA (402 aa)) is FAD-dependent cmnm(5)s(2)U34 oxidoreductase.

The protein in the N-terminal section; belongs to the methyltransferase superfamily. tRNA (mnm(5)s(2)U34)-methyltransferase family. This sequence in the C-terminal section; belongs to the DAO family. FAD serves as cofactor.

It is found in the cytoplasm. The catalysed reaction is 5-aminomethyl-2-thiouridine(34) in tRNA + S-adenosyl-L-methionine = 5-methylaminomethyl-2-thiouridine(34) in tRNA + S-adenosyl-L-homocysteine + H(+). Its function is as follows. Catalyzes the last two steps in the biosynthesis of 5-methylaminomethyl-2-thiouridine (mnm(5)s(2)U) at the wobble position (U34) in tRNA. Catalyzes the FAD-dependent demodification of cmnm(5)s(2)U34 to nm(5)s(2)U34, followed by the transfer of a methyl group from S-adenosyl-L-methionine to nm(5)s(2)U34, to form mnm(5)s(2)U34. The chain is tRNA 5-methylaminomethyl-2-thiouridine biosynthesis bifunctional protein MnmC from Ralstonia nicotianae (strain ATCC BAA-1114 / GMI1000) (Ralstonia solanacearum).